Consider the following 781-residue polypeptide: Acyl-CoA dehydrogenase family member 11 (781 aa).

N6-acetyllysine is present on K177. Phosphotyrosine is present on Y325. K392 is modified (N6-succinyllysine). Residues 505–515 (FCMTEPDVASS), 513–515 (ASS), 539–541 (WSS), and S541 contribute to the FAD site. Residue S515 coordinates substrate. 630–633 (GPGR) is a substrate binding site. Residues R658, Q728, and 728 to 732 (QVCGG) each bind FAD. Position 756 (G756) interacts with substrate. FAD is bound by residues 757-759 (PDE) and E759.

Belongs to the acyl-CoA dehydrogenase family. In terms of assembly, homodimer. It depends on FAD as a cofactor.

Its subcellular location is the peroxisome. It localises to the mitochondrion membrane. It carries out the reaction a 2,3-saturated acyl-CoA + oxidized [electron-transfer flavoprotein] + H(+) = a (2E)-enoyl-CoA + reduced [electron-transfer flavoprotein]. It catalyses the reaction docosanoyl-CoA + oxidized [electron-transfer flavoprotein] + H(+) = (2E)-docosenoyl-CoA + reduced [electron-transfer flavoprotein]. The enzyme catalyses tetracosanoyl-CoA + oxidized [electron-transfer flavoprotein] + H(+) = (2E)-tetracosenoyl-CoA + reduced [electron-transfer flavoprotein]. The catalysed reaction is eicosanoyl-CoA + oxidized [electron-transfer flavoprotein] + H(+) = (2E)-eicosenoyl-CoA + reduced [electron-transfer flavoprotein]. It carries out the reaction hexacosanoyl-CoA + oxidized [electron-transfer flavoprotein] + H(+) = (2E)-hexacosenoyl-CoA + reduced [electron-transfer flavoprotein]. It catalyses the reaction tricosanoyl-CoA + oxidized [electron-transfer flavoprotein] + H(+) = (2E)-tricosenoyl-CoA + reduced [electron-transfer flavoprotein]. It functions in the pathway lipid metabolism; fatty acid beta-oxidation. Functionally, acyl-CoA dehydrogenase, that exhibits maximal activity towards saturated C22-CoA. Probably participates in beta-oxydation and energy production but could also play a role in the metabolism of specific fatty acids to control fatty acids composition of cellular lipids in brain. The protein is Acyl-CoA dehydrogenase family member 11 (ACAD11) of Pongo abelii (Sumatran orangutan).